The sequence spans 456 residues: Shufflon protein D' (456 aa).

The tract at residues 1 to 361 is constant region; that stretch reads MKKYDRGWAS…TGAILSCQSG (361 aa). A variable region region spans residues 362–456; it reads TWRKSNSGST…KCSYVVACQN (95 aa).

This chain is Shufflon protein D', found in Escherichia coli.